Consider the following 740-residue polypeptide: Ion-translocating oxidoreductase complex subunit C (740 aa).

2 4Fe-4S ferredoxin-type domains span residues 369 to 397 (GEPQ…QQLY) and 407 to 436 (KATT…VQYF). [4Fe-4S] cluster is bound by residues C377, C380, C383, C387, C416, C419, C422, and C426. The tract at residues 602 to 717 (KLEQQQANAE…PEEQVDPRKA (116 aa)) is disordered. Low complexity-rich tracts occupy residues 605–615 (QQQANAEPEQQ) and 637–647 (QQQANAEPEQQ).

It belongs to the 4Fe4S bacterial-type ferredoxin family. RnfC subfamily. As to quaternary structure, the complex is composed of six subunits: RsxA, RsxB, RsxC, RsxD, RsxE and RsxG. Requires [4Fe-4S] cluster as cofactor.

It is found in the cell inner membrane. In terms of biological role, part of a membrane-bound complex that couples electron transfer with translocation of ions across the membrane. Required to maintain the reduced state of SoxR. This is Ion-translocating oxidoreductase complex subunit C from Escherichia coli (strain ATCC 8739 / DSM 1576 / NBRC 3972 / NCIMB 8545 / WDCM 00012 / Crooks).